A 381-amino-acid chain; its full sequence is F-box/LRR-repeat protein At4g14103 (381 aa).

The F-box domain maps to 7-60 (RDVISSLPDDISSHILSFLPTKEAASTSVLSKKWRYLFAFVPNLDLDDSVYLNP). LRR repeat units follow at residues 118–146 (DLHL…KLRF), 171–196 (HFEE…VLDD), 218–243 (SWQE…KFTD), 249–274 (YPKV…LINY), 299–330 (TLYL…TIES), and 331–356 (NPRV…IFQG).

The chain is F-box/LRR-repeat protein At4g14103 from Arabidopsis thaliana (Mouse-ear cress).